Consider the following 389-residue polypeptide: tRNA(Met) cytidine acetate ligase (389 aa).

ATP contacts are provided by residues 8 to 21, G97, N153, and R176; that span reads IAEFNPFHKGHEYL.

Belongs to the TmcAL family.

The protein resides in the cytoplasm. The enzyme catalyses cytidine(34) in elongator tRNA(Met) + acetate + ATP = N(4)-acetylcytidine(34) in elongator tRNA(Met) + AMP + diphosphate. Catalyzes the formation of N(4)-acetylcytidine (ac(4)C) at the wobble position of elongator tRNA(Met), using acetate and ATP as substrates. First activates an acetate ion to form acetyladenylate (Ac-AMP) and then transfers the acetyl group to tRNA to form ac(4)C34. This chain is tRNA(Met) cytidine acetate ligase, found in Lactococcus lactis subsp. lactis (strain IL1403) (Streptococcus lactis).